The chain runs to 425 residues: Pectate lyase L (425 aa).

An N-terminal signal peptide occupies residues 1–25 (MKYLNCFISTGLAAFFLVNSTSVLA). Residues cysteine 28 and cysteine 114 are joined by a disulfide bond. The Ca(2+) site is built by aspartate 209, aspartate 233, aspartate 234, and aspartate 237. Lysine 273 (proton acceptor) is an active-site residue. Ca(2+) is bound by residues asparagine 402, serine 413, alanine 416, aspartate 418, and glutamate 423.

The protein belongs to the polysaccharide lyase 9 family. The cofactor is Ca(2+).

The protein resides in the secreted. It carries out the reaction Eliminative cleavage of (1-&gt;4)-alpha-D-galacturonan to give oligosaccharides with 4-deoxy-alpha-D-galact-4-enuronosyl groups at their non-reducing ends.. It participates in glycan metabolism; pectin degradation; 2-dehydro-3-deoxy-D-gluconate from pectin: step 2/5. Functionally, presents an endo-cleaving activity on polygalacturonate or partially methylated pectin. Is effective in the maceration of plant tissue, and has an important role in soft-rot disease. Is 280-fold less active against polygalacturonate than the major pectate lyase PelB. When assayed on polygalacturonate, PelL releases oligogalacturonates of different sizes; upon prolonged incubation, PelL degrades the primary products to unsaturated tetramer and pentamer in addition to unsaturated dimer and trimer. When assayed on oligogalacturonates (degrees of polymerization of 2 to 8), it preferentially forms unsaturated tetramer, and displays the highest activity on the octamer. This Dickeya dadantii (strain 3937) (Erwinia chrysanthemi (strain 3937)) protein is Pectate lyase L (pelL).